A 313-amino-acid chain; its full sequence is Ribosomal RNA small subunit methyltransferase H (313 aa).

Residues 35 to 37, aspartate 55, phenylalanine 79, aspartate 101, and glutamine 108 each bind S-adenosyl-L-methionine; that span reads GGH.

Belongs to the methyltransferase superfamily. RsmH family.

It localises to the cytoplasm. It carries out the reaction cytidine(1402) in 16S rRNA + S-adenosyl-L-methionine = N(4)-methylcytidine(1402) in 16S rRNA + S-adenosyl-L-homocysteine + H(+). Functionally, specifically methylates the N4 position of cytidine in position 1402 (C1402) of 16S rRNA. This chain is Ribosomal RNA small subunit methyltransferase H, found in Shigella flexneri.